The chain runs to 303 residues: Elongation factor Ts (303 aa).

The interval 79–82 (TDFT) is involved in Mg(2+) ion dislocation from EF-Tu.

Belongs to the EF-Ts family.

It localises to the cytoplasm. Functionally, associates with the EF-Tu.GDP complex and induces the exchange of GDP to GTP. It remains bound to the aminoacyl-tRNA.EF-Tu.GTP complex up to the GTP hydrolysis stage on the ribosome. This is Elongation factor Ts from Magnetococcus marinus (strain ATCC BAA-1437 / JCM 17883 / MC-1).